Consider the following 407-residue polypeptide: UPF0597 protein NAMH_0191 (407 aa).

Belongs to the UPF0597 family.

The sequence is that of UPF0597 protein NAMH_0191 from Nautilia profundicola (strain ATCC BAA-1463 / DSM 18972 / AmH).